Here is a 770-residue protein sequence, read N- to C-terminus: NAD-dependent malic enzyme (770 aa).

Positions 1–440 (MNTGDKAKSQ…KLNRFVFRSG (440 aa)) are malic enzyme. K107 acts as the Proton acceptor in catalysis. Positions 149 and 150 each coordinate a divalent metal cation. NAD(+) is bound by residues D175 and N300. The interval 441–770 (FIMKPVFAAA…LAVVESSHPV (330 aa)) is phosphate acetyltransferase.

The protein in the N-terminal section; belongs to the malic enzymes family. It in the C-terminal section; belongs to the phosphate acetyltransferase and butyryltransferase family. As to quaternary structure, homooctamer. It depends on Mg(2+) as a cofactor. Mn(2+) serves as cofactor.

It carries out the reaction (S)-malate + NAD(+) = pyruvate + CO2 + NADH. With respect to regulation, subject to substrate inhibition and shows allosteric regulation by acetyl-CoA. Required for symbiotic nitrogen fixation. Plays a key role in the conversion of malate to acetyl-CoA for efficient tricarboxylic acid cycle function in nitrogen-fixating bacteria. This is NAD-dependent malic enzyme (dme) from Rhizobium meliloti (strain 1021) (Ensifer meliloti).